We begin with the raw amino-acid sequence, 201 residues long: L(+)-tartrate dehydratase subunit beta (201 aa).

His-37 is an active-site residue.

It belongs to the class-I fumarase family. In terms of assembly, heterotetramer of two alpha and two beta subunits.

The enzyme catalyses (2R,3R)-tartrate = oxaloacetate + H2O. In Shigella boydii serotype 4 (strain Sb227), this protein is L(+)-tartrate dehydratase subunit beta (ttdB).